The primary structure comprises 351 residues: Phosphoribosylformylglycinamidine cyclo-ligase (351 aa).

The protein belongs to the AIR synthase family.

It is found in the cytoplasm. It carries out the reaction 2-formamido-N(1)-(5-O-phospho-beta-D-ribosyl)acetamidine + ATP = 5-amino-1-(5-phospho-beta-D-ribosyl)imidazole + ADP + phosphate + H(+). It functions in the pathway purine metabolism; IMP biosynthesis via de novo pathway; 5-amino-1-(5-phospho-D-ribosyl)imidazole from N(2)-formyl-N(1)-(5-phospho-D-ribosyl)glycinamide: step 2/2. The sequence is that of Phosphoribosylformylglycinamidine cyclo-ligase from Burkholderia ambifaria (strain MC40-6).